Consider the following 254-residue polypeptide: Thiazole synthase (254 aa).

The Schiff-base intermediate with DXP role is filled by Lys96. 1-deoxy-D-xylulose 5-phosphate-binding positions include Gly157, 183–184 (AG), and 205–206 (NT).

It belongs to the ThiG family. Homotetramer. Forms heterodimers with either ThiH or ThiS.

Its subcellular location is the cytoplasm. The catalysed reaction is [ThiS sulfur-carrier protein]-C-terminal-Gly-aminoethanethioate + 2-iminoacetate + 1-deoxy-D-xylulose 5-phosphate = [ThiS sulfur-carrier protein]-C-terminal Gly-Gly + 2-[(2R,5Z)-2-carboxy-4-methylthiazol-5(2H)-ylidene]ethyl phosphate + 2 H2O + H(+). It functions in the pathway cofactor biosynthesis; thiamine diphosphate biosynthesis. Functionally, catalyzes the rearrangement of 1-deoxy-D-xylulose 5-phosphate (DXP) to produce the thiazole phosphate moiety of thiamine. Sulfur is provided by the thiocarboxylate moiety of the carrier protein ThiS. In vitro, sulfur can be provided by H(2)S. The polypeptide is Thiazole synthase (Clostridium kluyveri (strain ATCC 8527 / DSM 555 / NBRC 12016 / NCIMB 10680 / K1)).